The primary structure comprises 597 residues: Elongation factor 4 (597 aa).

The tr-type G domain maps to K2 to E184. GTP-binding positions include D14 to T19 and N131 to D134.

Belongs to the TRAFAC class translation factor GTPase superfamily. Classic translation factor GTPase family. LepA subfamily.

The protein localises to the cell inner membrane. The enzyme catalyses GTP + H2O = GDP + phosphate + H(+). Functionally, required for accurate and efficient protein synthesis under certain stress conditions. May act as a fidelity factor of the translation reaction, by catalyzing a one-codon backward translocation of tRNAs on improperly translocated ribosomes. Back-translocation proceeds from a post-translocation (POST) complex to a pre-translocation (PRE) complex, thus giving elongation factor G a second chance to translocate the tRNAs correctly. Binds to ribosomes in a GTP-dependent manner. This Edwardsiella ictaluri (strain 93-146) protein is Elongation factor 4.